The following is a 118-amino-acid chain: Holin-like protein CidA 2 (118 aa).

4 helical membrane-spanning segments follow: residues 5–27 (MLLL…QGVF), 31–50 (MPGS…TRIL), 62–84 (LLVF…ESFL), and 88–110 (GSII…GYIS).

The protein belongs to the CidA/LrgA family. CidA subfamily.

Its subcellular location is the cell membrane. Increases the activity of extracellular murein hydrolases possibly by mediating their export via hole formation. Inhibited by the antiholin-like proteins LrgAB. In an unstressed cell, the LrgAB products probably inhibit the function of the CidA protein. When a cell is stressed by the addition of antibiotics or by other factors in the environment, CidA possibly oligomerizes within the bacterial cell membrane, creating lesions that disrupt the proton motive force, which in turn results in loss of cell viability. These lesions are also hypothesized to regulate the subsequent cell lysis by either allowing the murein hydrolases access to the cell wall substrate and/or regulating their activity by a possible change in the cell wall pH that results from loss of membrane potential. This Bacillus anthracis protein is Holin-like protein CidA 2 (cidA2).